We begin with the raw amino-acid sequence, 588 residues long: Myc box-dependent-interacting protein 1 (588 aa).

N-acetylalanine is present on Ala2. The segment at 2–122 (AEMGSKGVTA…DYHQKLVDQA (121 aa)) is interaction with BIN2. Coiled coils occupy residues 15-42 (ASNV…TKDE) and 193-274 (HLVA…EKQH). Residues 29–276 (VLQKLGKADE…LVSLEKQHGS (248 aa)) enclose the BAR domain. The disordered stretch occupies residues 279 to 355 (FTVKAQPSDN…PKHTPSKEMK (77 aa)). Ser296, Ser298, and Ser304 each carry phosphoserine. Thr308 carries the phosphothreonine modification. Ser324 and Ser332 each carry phosphoserine. Positions 379–422 (FEAPGPFSEQASLLDLDFEPLPPVASPVKAPTPSGQSIPWDLWE) are clathrin-binding. Residues 448–484 (PSQTAEPGPAQPAEASEVVGGAQEPGETAASEATSSS) are disordered. Residues 474 to 484 (ETAASEATSSS) show a composition bias toward low complexity. In terms of domain architecture, SH3 spans 515-588 (GFMFKVQAQH…FPENFTERVQ (74 aa)).

Heterodimer with AMPH. Binds SH3GLB1. Interacts (via SH3 domain) with DNM1. Interacts with SYNJ1. Interacts (via SH3 domain) with DNM2. Interacts with CLTC. Interacts with AP2A2. Interacts with AP2B1. Interacts with MYC (via N-terminal transactivation domain); the interaction requires the integrity of the conserved MYC box regions 1 and 2. Interacts with BIN2. Interacts with SNX4. Interacts (via BAR domain) with BACE1. Binds (via BAR domain) F-actin. Phosphorylated by protein kinase C. As to expression, isoform 1 is expressed mainly in the brain. Isoform 2 is widely expressed.

The protein resides in the nucleus. Its subcellular location is the cytoplasm. It is found in the endosome. It localises to the cell membrane. The protein localises to the sarcolemma. The protein resides in the T-tubule. In terms of biological role, is a key player in the control of plasma membrane curvature, and membrane shaping and remodeling. Required in muscle cells for the formation of T-tubules, tubular invaginations of the plasma membrane that function in depolarization-contraction coupling. Required in muscle cells for the formation of T-tubules, tubular invaginations of the plasma membrane that function in depolarization-contraction coupling. Is a negative regulator of endocytosis. Is also involved in the regulation of intracellular vesicles sorting, modulation of BACE1 trafficking and the control of amyloid-beta production. In neuronal circuits, endocytosis regulation may influence the internalization of PHF-tau aggregates. May be involved in the regulation of MYC activity and the control cell proliferation. The chain is Myc box-dependent-interacting protein 1 (Bin1) from Mus musculus (Mouse).